The following is a 401-amino-acid chain: Solute carrier family 22 member 17 (401 aa).

The next 10 helical transmembrane spans lie at 10-30 (GIVL…AAAG), 35-55 (IMAL…GVYL), 69-89 (VALA…GLAL), 100-120 (MITA…FLES), 184-203 (NIWK…HAIR), 218-238 (FYLC…FLGV), 247-267 (GILL…LGLW), 277-297 (TFSV…TLLA), 309-329 (GLGL…AQRL), and 336-356 (FLQH…IMLL).

The protein belongs to the major facilitator (TC 2.A.1) superfamily. Organic cation transporter (TC 2.A.1.19) family. In terms of tissue distribution, widely expressed.

The protein localises to the cell membrane. Its subcellular location is the vacuole membrane. Functionally, cell surface receptor for LCN2 (24p3) that plays a key role in iron homeostasis and transport. Able to bind iron-bound LCN2 (holo-24p3), followed by internalization of holo-24p3 and release of iron, thereby increasing intracellular iron concentration and leading to inhibition of apoptosis. Also binds iron-free LCN2 (apo-24p3), followed by internalization of apo-24p3 and its association with an intracellular siderophore, leading to iron chelation and iron transfer to the extracellular medium, thereby reducing intracellular iron concentration and resulting in apoptosis. The polypeptide is Solute carrier family 22 member 17 (Slc22a17) (Mus musculus (Mouse)).